The sequence spans 235 residues: Protein Thf1 (235 aa).

Positions 183–204 (DKLNKDLELYRSNLDKMAQALV) form a coiled coil. Positions 213–235 (DRKKREQRKQQSTAPVAPPSSNE) are disordered. Residues 222–235 (QQSTAPVAPPSSNE) are compositionally biased toward polar residues.

This sequence belongs to the THF1 family.

Functionally, may be involved in photosynthetic membrane biogenesis. This Nostoc punctiforme (strain ATCC 29133 / PCC 73102) protein is Protein Thf1.